Here is a 560-residue protein sequence, read N- to C-terminus: Membrane protein insertase YidC (560 aa).

Helical transmembrane passes span 5–25 (IINLIAAIILSLSIIFGWQYF), 334–354 (AIDFGWFYIITKPVFYAMNFF), 357–377 (YVGNFGVSILIVTVIIKLLMF), 431–451 (LPILVQIPVFFSIYKVLYVTI), 476–496 (LFGLLPFAPPSFLMIGAWPIL), and 522–542 (FMPLIFLFMFSSFPVGLLIYW).

Belongs to the OXA1/ALB3/YidC family. Type 1 subfamily. As to quaternary structure, interacts with the Sec translocase complex via SecD. Specifically interacts with transmembrane segments of nascent integral membrane proteins during membrane integration.

The protein resides in the cell inner membrane. Required for the insertion and/or proper folding and/or complex formation of integral membrane proteins into the membrane. Involved in integration of membrane proteins that insert both dependently and independently of the Sec translocase complex, as well as at least some lipoproteins. Aids folding of multispanning membrane proteins. This chain is Membrane protein insertase YidC, found in Rickettsia rickettsii (strain Iowa).